The chain runs to 255 residues: Imidazole glycerol phosphate synthase subunit HisF (255 aa).

Residues Asp12 and Asp131 contribute to the active site.

Belongs to the HisA/HisF family. As to quaternary structure, heterodimer of HisH and HisF.

It is found in the cytoplasm. It catalyses the reaction 5-[(5-phospho-1-deoxy-D-ribulos-1-ylimino)methylamino]-1-(5-phospho-beta-D-ribosyl)imidazole-4-carboxamide + L-glutamine = D-erythro-1-(imidazol-4-yl)glycerol 3-phosphate + 5-amino-1-(5-phospho-beta-D-ribosyl)imidazole-4-carboxamide + L-glutamate + H(+). It participates in amino-acid biosynthesis; L-histidine biosynthesis; L-histidine from 5-phospho-alpha-D-ribose 1-diphosphate: step 5/9. Functionally, IGPS catalyzes the conversion of PRFAR and glutamine to IGP, AICAR and glutamate. The HisF subunit catalyzes the cyclization activity that produces IGP and AICAR from PRFAR using the ammonia provided by the HisH subunit. The chain is Imidazole glycerol phosphate synthase subunit HisF from Salinispora tropica (strain ATCC BAA-916 / DSM 44818 / JCM 13857 / NBRC 105044 / CNB-440).